The sequence spans 360 residues: Phospho-N-acetylmuramoyl-pentapeptide-transferase (360 aa).

Residues Met1–Arg25 lie on the Periplasmic side of the membrane. Residues Ala26–Ala46 traverse the membrane as a helical segment. Residues His47 to Thr71 lie on the Cytoplasmic side of the membrane. The chain crosses the membrane as a helical span at residues Pro72–Tyr92. Pro93 is a topological domain (periplasmic). A helical membrane pass occupies residues Ser94–Val114. Over Asp115 to Arg131 the chain is Cytoplasmic. The chain crosses the membrane as a helical span at residues Trp132 to Gly152. Residues Lys153 to Asp167 are Periplasmic-facing. The helical transmembrane segment at Val168 to Gly188 threads the bilayer. Residues Asn189–Asp198 lie on the Cytoplasmic side of the membrane. Residues Gly199 to Thr219 traverse the membrane as a helical segment. Residues Gly220 to His235 lie on the Periplasmic side of the membrane. A helical membrane pass occupies residues Ala236–Phe256. Over Asn257–Gln262 the chain is Cytoplasmic. A helical transmembrane segment spans residues Val263 to Leu283. At Leu284–Glu287 the chain is on the periplasmic side. Residues Phe288 to Val308 traverse the membrane as a helical segment. Over Gly309–Arg337 the chain is Cytoplasmic. The chain crosses the membrane as a helical span at residues Val338–Lys358. At Val359–Arg360 the chain is on the periplasmic side.

Belongs to the glycosyltransferase 4 family. MraY subfamily. Mg(2+) is required as a cofactor.

It is found in the cell inner membrane. It catalyses the reaction UDP-N-acetyl-alpha-D-muramoyl-L-alanyl-gamma-D-glutamyl-meso-2,6-diaminopimeloyl-D-alanyl-D-alanine + di-trans,octa-cis-undecaprenyl phosphate = di-trans,octa-cis-undecaprenyl diphospho-N-acetyl-alpha-D-muramoyl-L-alanyl-D-glutamyl-meso-2,6-diaminopimeloyl-D-alanyl-D-alanine + UMP. It functions in the pathway cell wall biogenesis; peptidoglycan biosynthesis. Its function is as follows. Catalyzes the initial step of the lipid cycle reactions in the biosynthesis of the cell wall peptidoglycan: transfers peptidoglycan precursor phospho-MurNAc-pentapeptide from UDP-MurNAc-pentapeptide onto the lipid carrier undecaprenyl phosphate, yielding undecaprenyl-pyrophosphoryl-MurNAc-pentapeptide, known as lipid I. In Escherichia coli O157:H7, this protein is Phospho-N-acetylmuramoyl-pentapeptide-transferase.